Consider the following 296-residue polypeptide: ATP synthase gamma chain (296 aa).

The protein belongs to the ATPase gamma chain family. As to quaternary structure, F-type ATPases have 2 components, CF(1) - the catalytic core - and CF(0) - the membrane proton channel. CF(1) has five subunits: alpha(3), beta(3), gamma(1), delta(1), epsilon(1). CF(0) has three main subunits: a, b and c.

It localises to the cell inner membrane. Produces ATP from ADP in the presence of a proton gradient across the membrane. The gamma chain is believed to be important in regulating ATPase activity and the flow of protons through the CF(0) complex. The protein is ATP synthase gamma chain of Jannaschia sp. (strain CCS1).